Consider the following 501-residue polypeptide: Glycine betaine/proline/ectoine/pipecolic acid transporter OusA (501 aa).

The Cytoplasmic segment spans residues 1–38 (MKLKRKRVKPIALDDVTIIDDGRLRKAITAAALGNAME). Residues 39 to 59 (WFDFGVYGFVAYALGQVFFPG) form a helical membrane-spanning segment. Over 60–66 (ADPGVQM) the chain is Periplasmic. The helical transmembrane segment at 67-87 (IAALATFSVPFLIRPLGGVFF) threads the bilayer. Topologically, residues 88 to 98 (GALGDKYGRQK) are cytoplasmic. The chain crosses the membrane as a helical span at residues 99-119 (ILAITIIIMSISTFCIGLIPS). At 120-122 (YER) the chain is on the periplasmic side. A helical transmembrane segment spans residues 123–143 (IGIWAPILLLLAKMAQGFSVG). Residues 144-170 (GEYTGASIFVAEYSPDRKRGFMGSWLD) are Cytoplasmic-facing. The chain crosses the membrane as a helical span at residues 171-191 (FGSIAGFVLGAGVVVLISTLI). At 192–195 (GEQA) the chain is on the periplasmic side. Residues 196-216 (FLAWGWRLPFFLALPLGLIGL) form a helical membrane-spanning segment. Over 217–261 (YLRHALEETPAFRQHVEKLEQNDRDGLKAGPGVSFREIATHHWKS) the chain is Cytoplasmic. Residues 262 to 282 (LLVCIGLVIATNVTYYMLLTY) traverse the membrane as a helical segment. The Periplasmic segment spans residues 283–298 (MPSYLSHSLHYSENHG). The chain crosses the membrane as a helical span at residues 299–319 (VLIIIAIMIGMLFVQPVMGLL). Residues 320 to 326 (SDRFGRK) are Cytoplasmic-facing. A helical membrane pass occupies residues 327–347 (PFVVIGSVAMFFLAVPSFMLI). Residues 348–350 (NSD) lie on the Periplasmic side of the membrane. The chain crosses the membrane as a helical span at residues 351–371 (IIGLIFLGLLMLAVILNAFTG). Residues 372-391 (VMASTLPALFPTHIRYSALA) are Cytoplasmic-facing. Residues 392–412 (SAFNISVLIAGLTPTVAAWLV) form a helical membrane-spanning segment. Topologically, residues 413 to 417 (ESSQN) are periplasmic. The helical transmembrane segment at 418–438 (LYMPAYYLMVIAVIGLLTGLF) threads the bilayer. Over 439 to 501 (MKETANKPLK…LVAQHPRIND (63 aa)) the chain is Cytoplasmic. Residues 461–495 (KEILQEHHDNIEHKIEDITQQIAELEAKRQLLVAQ) are a coiled coil.

Belongs to the major facilitator superfamily. Sugar transporter (TC 2.A.1.1) family.

Its subcellular location is the cell inner membrane. Functionally, involved in uptake and accumulation of various osmoprotectants. Allows the uptake of glycine betaine, proline, ectoine, and pipecolic acid. May be a contributory factor in the infection progression within the host. The polypeptide is Glycine betaine/proline/ectoine/pipecolic acid transporter OusA (Dickeya dadantii (strain 3937) (Erwinia chrysanthemi (strain 3937))).